Here is a 338-residue protein sequence, read N- to C-terminus: Ketol-acid reductoisomerase (NADP(+)) (338 aa).

The KARI N-terminal Rossmann domain occupies 1–181; sequence MQIFYDKDCD…GGGRTGIIET (181 aa). NADP(+) contacts are provided by residues 24–27, Arg-47, Ser-50, Ser-52, and 82–85; these read YGSQ and DEFQ. His-107 is an active-site residue. Residue Gly-133 coordinates NADP(+). The region spanning 182-327 is the KARI C-terminal knotted domain; the sequence is SFREETETDL…SKLRAMMPWI (146 aa). Residues Asp-190, Glu-194, Glu-226, and Glu-230 each contribute to the Mg(2+) site. Ser-251 lines the substrate pocket.

Belongs to the ketol-acid reductoisomerase family. Mg(2+) serves as cofactor.

The enzyme catalyses (2R)-2,3-dihydroxy-3-methylbutanoate + NADP(+) = (2S)-2-acetolactate + NADPH + H(+). The catalysed reaction is (2R,3R)-2,3-dihydroxy-3-methylpentanoate + NADP(+) = (S)-2-ethyl-2-hydroxy-3-oxobutanoate + NADPH + H(+). The protein operates within amino-acid biosynthesis; L-isoleucine biosynthesis; L-isoleucine from 2-oxobutanoate: step 2/4. It participates in amino-acid biosynthesis; L-valine biosynthesis; L-valine from pyruvate: step 2/4. Functionally, involved in the biosynthesis of branched-chain amino acids (BCAA). Catalyzes an alkyl-migration followed by a ketol-acid reduction of (S)-2-acetolactate (S2AL) to yield (R)-2,3-dihydroxy-isovalerate. In the isomerase reaction, S2AL is rearranged via a Mg-dependent methyl migration to produce 3-hydroxy-3-methyl-2-ketobutyrate (HMKB). In the reductase reaction, this 2-ketoacid undergoes a metal-dependent reduction by NADPH to yield (R)-2,3-dihydroxy-isovalerate. In Acinetobacter baylyi (strain ATCC 33305 / BD413 / ADP1), this protein is Ketol-acid reductoisomerase (NADP(+)).